The following is a 144-amino-acid chain: MNLNTLSPDPGSRPSRRRVGRGIGSGLGKTCGKGHKGQKSRAGGYHKINFEGGQMPIQRRLPKMGFKSRVGRTIDEVSLGELAKLNDEVIDLVALRKAGLINNSIKDVKVILSGELTAAIKLKGLRVTKGARSAIESLGGSIEE.

The tract at residues 1–45 (MNLNTLSPDPGSRPSRRRVGRGIGSGLGKTCGKGHKGQKSRAGGY) is disordered. The segment covering 21 to 31 (RGIGSGLGKTC) has biased composition (gly residues).

It belongs to the universal ribosomal protein uL15 family. Part of the 50S ribosomal subunit.

Its function is as follows. Binds to the 23S rRNA. This is Large ribosomal subunit protein uL15 from Legionella pneumophila (strain Paris).